Consider the following 184-residue polypeptide: Peptidyl-tRNA hydrolase (184 aa).

TRNA is bound at residue tyrosine 17. Residue histidine 22 is the Proton acceptor of the active site. TRNA is bound by residues phenylalanine 71, asparagine 73, and asparagine 119.

The protein belongs to the PTH family. As to quaternary structure, monomer.

It localises to the cytoplasm. The enzyme catalyses an N-acyl-L-alpha-aminoacyl-tRNA + H2O = an N-acyl-L-amino acid + a tRNA + H(+). In terms of biological role, hydrolyzes ribosome-free peptidyl-tRNAs (with 1 or more amino acids incorporated), which drop off the ribosome during protein synthesis, or as a result of ribosome stalling. Catalyzes the release of premature peptidyl moieties from peptidyl-tRNA molecules trapped in stalled 50S ribosomal subunits, and thus maintains levels of free tRNAs and 50S ribosomes. The sequence is that of Peptidyl-tRNA hydrolase from Corynebacterium diphtheriae (strain ATCC 700971 / NCTC 13129 / Biotype gravis).